Consider the following 712-residue polypeptide: Polyribonucleotide nucleotidyltransferase (712 aa).

Mg(2+) is bound by residues Asp-487 and Asp-493. The KH domain occupies 554 to 613 (PKIITMTINPDKIRDVIGPSGKQINKIIEETGVKIDIEQDGTVFISSINQEMNDKAKKII). The 69-residue stretch at 623 to 691 (GEIYEGKVKR…KQGRVNLSRK (69 aa)) folds into the S1 motif domain.

The protein belongs to the polyribonucleotide nucleotidyltransferase family. Requires Mg(2+) as cofactor.

Its subcellular location is the cytoplasm. It catalyses the reaction RNA(n+1) + phosphate = RNA(n) + a ribonucleoside 5'-diphosphate. In terms of biological role, involved in mRNA degradation. Catalyzes the phosphorolysis of single-stranded polyribonucleotides processively in the 3'- to 5'-direction. This Bacillus anthracis (strain CDC 684 / NRRL 3495) protein is Polyribonucleotide nucleotidyltransferase.